The following is a 131-amino-acid chain: D-ribose pyranase (131 aa).

The active-site Proton donor is His20. Residues Asp28, His98, and 120-122 (YSN) contribute to the substrate site.

This sequence belongs to the RbsD / FucU family. RbsD subfamily. In terms of assembly, homodecamer.

Its subcellular location is the cytoplasm. It catalyses the reaction beta-D-ribopyranose = beta-D-ribofuranose. Its pathway is carbohydrate metabolism; D-ribose degradation; D-ribose 5-phosphate from beta-D-ribopyranose: step 1/2. Its function is as follows. Catalyzes the interconversion of beta-pyran and beta-furan forms of D-ribose. The polypeptide is D-ribose pyranase (Lactobacillus johnsonii (strain CNCM I-12250 / La1 / NCC 533)).